The primary structure comprises 97 residues: MEVTDVRLRRVNTDGRMRAIASITLDHEFVVHDIRVIDGNNGLFVAMPSKRTPDGEFRDIAHPINSSTRGKIQDAVLNEYHRLGDVEEIEYEEIGAS.

It belongs to the SpoVG family.

Essential for sporulation. Interferes with or is a negative regulator of the pathway leading to asymmetric septation. The sequence is that of Putative septation protein SpoVG from Bacillus licheniformis (strain ATCC 14580 / DSM 13 / JCM 2505 / CCUG 7422 / NBRC 12200 / NCIMB 9375 / NCTC 10341 / NRRL NRS-1264 / Gibson 46).